The primary structure comprises 437 residues: Cytochrome b (437 aa).

A helical membrane pass occupies residues 45-65; that stretch reads WIWGIVLAFTLVLQIVTGIVL. Heme b is bound by residues H97 and H111. 9 helical membrane passes run 100-120, 129-149, 156-176, 194-214, 248-268, 298-318, 330-350, 365-385, and 391-411; these read GASL…YYGS, WIVG…GYVL, FWGA…GPSI, FFSL…IHIW, FVIK…AVVA, FLPF…VILV, FFGV…PWLD, MWFW…AMPT, and WISL…LPLL. Residues H198 and H212 each contribute to the heme b site.

The protein belongs to the cytochrome b family. The main subunits of complex b-c1 are: cytochrome b, cytochrome c1 and the Rieske protein. It depends on heme b as a cofactor.

The protein localises to the cell membrane. In terms of biological role, component of the ubiquinol-cytochrome c reductase complex (complex III or cytochrome b-c1 complex), which is a respiratory chain that generates an electrochemical potential coupled to ATP synthesis. This chain is Cytochrome b (petB), found in Rhodobacter capsulatus (Rhodopseudomonas capsulata).